Consider the following 192-residue polypeptide: Interleukin-18 (192 aa).

The propeptide occupies Met1–Asp35.

It belongs to the IL-1 family. Forms a ternary complex with ligand-binding receptor subunit IL18R1 and signaling receptor subunit IL18RAP at the plasma membrane. Mature IL18 first binds to IL18R1 forming a low affinity binary complex, which then interacts with IL18RAP to form a high affinity ternary complex that signals inside the cell. Interacts with cargo receptor TMED10; the interaction mediates the translocation from the cytoplasm into the ERGIC (endoplasmic reticulum-Golgi intermediate compartment) and thereby secretion. The pro-IL-18 precursor is processed by CASP1 to yield its mature, active form. The pro-IL-18 precursor is however not processed by Casp4/Casp11 in rodents. The pro-IL-18 precursor features autoinhibitory interactions between the propeptide and the post-cleavage-site region, preventing recognition by the IL18R1 receptor. Processing by CASP1 induces conformational changes to generate critical receptor-binding sites. The mature form is then secreted and released in the extracellular milieu by passing through the gasdermin-D (GSDMD) pore. In contrast, cleavage by CASP3 inactivates IL18.

It is found in the cytoplasm. The protein resides in the secreted. Its function is as follows. Pro-inflammatory cytokine primarily involved in epithelial barrier repair, polarized T-helper 1 (Th1) cell and natural killer (NK) cell immune responses. Upon binding to IL18R1 and IL18RAP, forms a signaling ternary complex which activates NF-kappa-B, triggering synthesis of inflammatory mediators. Synergizes with IL12/interleukin-12 to induce IFNG synthesis from T-helper 1 (Th1) cells and natural killer (NK) cells. Involved in transduction of inflammation downstream of pyroptosis: its mature form is specifically released in the extracellular milieu by passing through the gasdermin-D (GSDMD) pore. This Mus musculus (Mouse) protein is Interleukin-18.